A 530-amino-acid polypeptide reads, in one-letter code: uncharacterized protein (530 aa).

Basic and acidic residues-rich tracts occupy residues 1–11 and 28–38; these read MTALNDTERAV and PRSEETASERP. The tract at residues 1–38 is disordered; sequence MTALNDTERAVRNWTAGRPHRPAPMRPPRSEETASERP. The Cytoplasmic segment spans residues 1–50; the sequence is MTALNDTERAVRNWTAGRPHRPAPMRPPRSEETASERPSRYYPTWLPSRS. The helical transmembrane segment at 51-71 threads the bilayer; that stretch reads FIAAVIAIGGMQLLATMDSTV. Residues 72-91 are Extracellular-facing; it reads AIVALPKIQNELSLSDAGRS. The helical transmembrane segment at 92-112 threads the bilayer; sequence WVITAYVLTFGGLMLLGGRLG. At 113–119 the chain is on the cytoplasmic side; the sequence is DTIGRKR. Residues 120–140 form a helical membrane-spanning segment; the sequence is TFIVGVALFTISSVLCAVAWD. Topologically, residues 141 to 150 are extracellular; sequence EATLVIARLS. The helical transmembrane segment at 151 to 171 threads the bilayer; the sequence is QGVGSAIASPTGLALVATTFP. Over 172-180 the chain is Cytoplasmic; the sequence is KGPARNAAT. The chain crosses the membrane as a helical span at residues 181 to 201; sequence AVFAAMTAIGSVMGLVVGGAL. The Extracellular segment spans residues 202–203; it reads TE. The chain crosses the membrane as a helical span at residues 204 to 224; that stretch reads VSWRWAFLVNVPIGLVMIYLA. The Cytoplasmic segment spans residues 225–239; the sequence is RTALRETNKERMKLD. The helical transmembrane segment at 240–260 threads the bilayer; that stretch reads ATGAILATLACTAAVFAFSIG. The Extracellular segment spans residues 261 to 266; the sequence is PEKGWM. Residues 267–287 traverse the membrane as a helical segment; the sequence is SGITIGSGLVALAAAVAFVIV. Residues 288-306 lie on the Cytoplasmic side of the membrane; it reads ERTAENPVVPFHLFRDRNR. Residues 307–327 form a helical membrane-spanning segment; sequence LVTFSAILLAGGVMFSLTVCI. Residues 328-343 lie on the Extracellular side of the membrane; it reads GLYVQDILGYSALRAG. A helical membrane pass occupies residues 344-364; it reads VGFIPFVIAMGIGLGVSSQLV. Residues 365-370 are Cytoplasmic-facing; that stretch reads SRFSPR. A helical membrane pass occupies residues 371 to 391; it reads VLTIGGGYLLFGAMLYGSFFM. Residues 392-400 are Extracellular-facing; it reads HRGVPYFPN. Residues 401–421 form a helical membrane-spanning segment; that stretch reads LVMPIVVGGIGIGMAVVPLTL. Topologically, residues 422–437 are cytoplasmic; sequence SAIAGVGFDQIGPVSA. Residues 438–458 form a helical membrane-spanning segment; that stretch reads IALMLQSLGGPLVLAVIQAVI. Topologically, residues 459-488 are extracellular; sequence TSRTLYLGGTTGPVKFMNDVQLAALDHAYT. The helical transmembrane segment at 489 to 509 threads the bilayer; the sequence is YGLLWVAGAAIIVGGMALFIG. The Cytoplasmic portion of the chain corresponds to 510-530; the sequence is YTPQQVAHAQEVKEAIDAGEL.

It belongs to the major facilitator superfamily.

The protein localises to the cell membrane. This is an uncharacterized protein from Mycobacterium tuberculosis (strain CDC 1551 / Oshkosh).